The chain runs to 342 residues: RNA 3'-terminal phosphate cyclase (342 aa).

ATP-binding positions include Q100 and 283–287 (FLGDQ). H307 (tele-AMP-histidine intermediate) is an active-site residue.

Belongs to the RNA 3'-terminal cyclase family. Type 1 subfamily.

The protein localises to the cytoplasm. The enzyme catalyses a 3'-end 3'-phospho-ribonucleotide-RNA + ATP = a 3'-end 2',3'-cyclophospho-ribonucleotide-RNA + AMP + diphosphate. Catalyzes the conversion of 3'-phosphate to a 2',3'-cyclic phosphodiester at the end of RNA. The mechanism of action of the enzyme occurs in 3 steps: (A) adenylation of the enzyme by ATP; (B) transfer of adenylate to an RNA-N3'P to produce RNA-N3'PP5'A; (C) and attack of the adjacent 2'-hydroxyl on the 3'-phosphorus in the diester linkage to produce the cyclic end product. The biological role of this enzyme is unknown but it is likely to function in some aspects of cellular RNA processing. This is RNA 3'-terminal phosphate cyclase (rtcA) from Pyrococcus abyssi (strain GE5 / Orsay).